A 365-amino-acid polypeptide reads, in one-letter code: MEGQSVEELLAKAKQEEAEKLQRITVHKELELEFDLGNLLASDRNPPTVLRQAGPSPEAELRALARDNTQLLVNQLWQLPTERVEEAVVARLPEPATRLPREKPLPRPRPLTRWQQFARLKGIRPKKKTNLVWDEVSGQWRRRWGYKRARDDTKEWLIEVPGSADPMEDQFAKRIRAKKERVAKNELNRLRNLARAHKMQMPSSAGLHPTGHQSKEELGRAMQVAKVSTASVGRFQERLPKEKAPRGSGKKRKFQPLFGDFAAEKKNQLELLRVMNSKKPQLDVTRATNKQMREEDQEEAAKRRKMSQKGKKKGGRQGPSGRRKGGPPSQGEKRKGVLGGKKHSRPPALGGKKKGVPHHGGKRRK.

At M1 the chain carries N-acetylmethionine. S5 is modified (phosphoserine). Glycyl lysine isopeptide (Lys-Gly) (interchain with G-Cter in SUMO2) cross-links involve residues K154 and K226. The segment at 200–255 (QMPSSAGLHPTGHQSKEELGRAMQVAKVSTASVGRFQERLPKEKAPRGSGKKRKFQ) is disordered. Residues 235 to 245 (FQERLPKEKAP) show a composition bias toward basic and acidic residues. K266 participates in a covalent cross-link: Glycyl lysine isopeptide (Lys-Gly) (interchain with G-Cter in SUMO2). A disordered region spans residues 272–365 (LRVMNSKKPQ…VPHHGGKRRK (94 aa)). Position 273 is a citrulline (R273). 2 stretches are compositionally biased toward basic residues: residues 302–325 (KRRK…RRKG) and 340–365 (GKKH…KRRK).

This sequence belongs to the RRS1 family. Component of a hexameric 5S RNP precursor complex, composed of 5S RNA, RRS1, RPF2/BXDC1, RPL5, RPL11 and HEATR3; this complex acts as a precursor for ribosome assembly. Citrullinated by PADI4.

The protein localises to the nucleus. It localises to the nucleolus. Involved in ribosomal large subunit assembly. May regulate the localization of the 5S RNP/5S ribonucleoprotein particle to the nucleolus. The chain is Ribosome biogenesis regulatory protein homolog (Rrs1) from Rattus norvegicus (Rat).